The sequence spans 26 residues: Toxin b subunit alpha (26 aa).

As to quaternary structure, toxin b is a heterodimer composed of toxin alpha and toxin beta. As to expression, expressed by the venom gland.

It is found in the secreted. Functionally, binds to sodium channels (Nav) and affects the channel activation process. The chain is Toxin b subunit alpha from Androctonus crassicauda (Arabian fat-tailed scorpion).